The primary structure comprises 299 residues: Single myb histone 1 (299 aa).

Positions 1 to 61 constitute an HTH myb-type domain; sequence MGAPKQRWTP…KWRNLSVTAG (61 aa). The segment at residues 28-57 is a DNA-binding region (H-T-H motif); sequence WRTILRDSDFSALLRLRSNVDLKDKWRNLS. The region spanning 124-192 is the H15 domain; it reads SVARLDDLIL…KVNQKYRIAP (69 aa). Residues 238–279 adopt a coiled-coil conformation; that stretch reads EEAAAFAAKAVAEAEVAIAEAEEAARVAEAAENDAEAAKAFL.

Belongs to the histone H1/H5 family. SMH subfamily. Forms a homodimer and heterodimers. As to expression, expressed in leaves.

The protein localises to the nucleus. The protein resides in the chromosome. It localises to the nucleolus. It is found in the telomere. Binds preferentially double-stranded telomeric repeats 5'-TTTAGGG-3', but can also bind to the single G-rich and C-rich telomeric strand. This is Single myb histone 1 (SMH1) from Zea mays (Maize).